The chain runs to 232 residues: Ashwin (232 aa).

Basic and acidic residues-rich tracts occupy residues 64–97 (DLPKSRWGKMMEKKREQHEIKKETKRSSPADGLR) and 116–127 (KKTENGDNDRLR). The segment at 64–232 (DLPKSRWGKM…KRKIQHVTWP (169 aa)) is disordered. Positions 130 to 140 (PQASATSNTFR) are enriched in polar residues. The residue at position 143 (Ser143) is a Phosphoserine. The segment covering 144–156 (DSSSSVSPLVLSS) has biased composition (low complexity). A compositionally biased stretch (basic and acidic residues) spans 163–179 (KMEHGNNDNKQNHDLTH). Residues Ser182, Ser189, and Ser193 each carry the phosphoserine modification. Position 198 is a phosphothreonine (Thr198).

The protein belongs to the ashwin family. In terms of assembly, component of the tRNA-splicing ligase complex.

Its subcellular location is the nucleus. The polypeptide is Ashwin (Bos taurus (Bovine)).